The chain runs to 349 residues: CCN family member 2 (349 aa).

Residues 1-26 (MTAASMGPVRVAFVVLLALCSRPAVG) form the signal peptide. One can recognise an IGFBP N-terminal domain in the interval 27–98 (QNCSGPCRCP…NRKIGVCTAK (72 aa)). N28 is a glycosylation site (N-linked (GlcNAc...) asparagine). 6 disulfide bridges follow: C29–C54, C33–C56, C35–C57, C43–C60, C68–C82, and C74–C95. Positions 101–167 (APCIFGGTVY…GKCCEEWVCD (67 aa)) constitute a VWFC domain. Positions 198–243 (NCLVQTTEWSACSKTCGMGISTRVTNDNASCRLEKQSRLCMVRPCE) constitute a TSP type-1 domain. N225 carries N-linked (GlcNAc...) asparagine glycosylation. Residues 247–349 (EENIKKGKKC…YYRKMYGDMA (103 aa)) form a heparin-binding region. Disulfide bonds link C256-C293, C273-C307, C284-C323, C287-C325, and C292-C329. Residues 256–330 (CIRTPKISKP…KTCACHYNCP (75 aa)) form the CTCK domain.

It belongs to the CCN family. In terms of assembly, monomer. Interacts with TSKU. Expressed in bone marrow and thymic cells. Also expressed one of two Wilms tumors tested.

It is found in the secreted. It localises to the extracellular space. Its subcellular location is the extracellular matrix. Major connective tissue mitoattractant secreted by vascular endothelial cells. Promotes proliferation and differentiation of chondrocytes. Is involved in the stimulation of osteoblast differentiation and has a critical role in osteogenesis. Mediates heparin- and divalent cation-dependent cell adhesion in many cell types including fibroblasts, myofibroblasts, endothelial and epithelial cells. Enhances fibroblast growth factor-induced DNA synthesis. The polypeptide is CCN family member 2 (Homo sapiens (Human)).